A 969-amino-acid chain; its full sequence is Glycine dehydrogenase (decarboxylating) (969 aa).

An N6-(pyridoxal phosphate)lysine modification is found at K716.

Belongs to the GcvP family. In terms of assembly, the glycine cleavage system is composed of four proteins: P, T, L and H. Requires pyridoxal 5'-phosphate as cofactor.

The catalysed reaction is N(6)-[(R)-lipoyl]-L-lysyl-[glycine-cleavage complex H protein] + glycine + H(+) = N(6)-[(R)-S(8)-aminomethyldihydrolipoyl]-L-lysyl-[glycine-cleavage complex H protein] + CO2. Its function is as follows. The glycine cleavage system catalyzes the degradation of glycine. The P protein binds the alpha-amino group of glycine through its pyridoxal phosphate cofactor; CO(2) is released and the remaining methylamine moiety is then transferred to the lipoamide cofactor of the H protein. The polypeptide is Glycine dehydrogenase (decarboxylating) (Shewanella woodyi (strain ATCC 51908 / MS32)).